The following is a 25-amino-acid chain: Retinol-binding protein 3 (25 aa).

The protein resides in the secreted. It is found in the extracellular space. Its subcellular location is the extracellular matrix. The protein localises to the interphotoreceptor matrix. IRBP shuttles 11-cis and all trans retinoids between the retinol isomerase in the pigment epithelium and the visual pigments in the photoreceptor cells of the retina. This is Retinol-binding protein 3 (RBP3) from Sus scrofa (Pig).